A 328-amino-acid polypeptide reads, in one-letter code: Probable cytosolic iron-sulfur protein assembly protein 1 (328 aa).

WD repeat units lie at residues 12-49 (LHGD…LVEE), 54-93 (AHKK…YSGE), 102-141 (GHEN…EEFE), 148-187 (EHSQ…WECA), 192-233 (GHGG…ADVF), 246-284 (VHTR…RWEV), and 291-328 (AHTV…LREE).

The protein belongs to the WD repeat CIA1 family. As to quaternary structure, interacts with NAR1.

The protein resides in the cytoplasm. The protein localises to the nucleus. Its function is as follows. Essential component of the cytosolic iron-sulfur (Fe/S) protein assembly machinery. Required for the maturation of extramitochondrial Fe/S proteins. This is Probable cytosolic iron-sulfur protein assembly protein 1 from Eremothecium gossypii (strain ATCC 10895 / CBS 109.51 / FGSC 9923 / NRRL Y-1056) (Yeast).